A 245-amino-acid chain; its full sequence is 4-hydroxy-tetrahydrodipicolinate reductase (245 aa).

Residues 7-12 (GAKGKV), 75-77 (GTT), and 102-105 (APNF) contribute to the NAD(+) site. Catalysis depends on histidine 132, which acts as the Proton donor/acceptor. Histidine 133 is a binding site for (S)-2,3,4,5-tetrahydrodipicolinate. The active-site Proton donor is the lysine 136. 142 to 143 (GT) contributes to the (S)-2,3,4,5-tetrahydrodipicolinate binding site.

It belongs to the DapB family.

It localises to the cytoplasm. It catalyses the reaction (S)-2,3,4,5-tetrahydrodipicolinate + NAD(+) + H2O = (2S,4S)-4-hydroxy-2,3,4,5-tetrahydrodipicolinate + NADH + H(+). The catalysed reaction is (S)-2,3,4,5-tetrahydrodipicolinate + NADP(+) + H2O = (2S,4S)-4-hydroxy-2,3,4,5-tetrahydrodipicolinate + NADPH + H(+). The protein operates within amino-acid biosynthesis; L-lysine biosynthesis via DAP pathway; (S)-tetrahydrodipicolinate from L-aspartate: step 4/4. Catalyzes the conversion of 4-hydroxy-tetrahydrodipicolinate (HTPA) to tetrahydrodipicolinate. The chain is 4-hydroxy-tetrahydrodipicolinate reductase from Mycobacterium sp. (strain JLS).